Consider the following 308-residue polypeptide: GMP synthase [glutamine-hydrolyzing] subunit B (308 aa).

Residues 1–185 (MNWEKFVEEK…LGLPEKIYNR (185 aa)) form the GMPS ATP-PPase domain. 28 to 34 (SGGVDSS) contacts ATP.

As to quaternary structure, heterodimer composed of a glutamine amidotransferase subunit (A) and a GMP-binding subunit (B).

It carries out the reaction XMP + L-glutamine + ATP + H2O = GMP + L-glutamate + AMP + diphosphate + 2 H(+). The protein operates within purine metabolism; GMP biosynthesis; GMP from XMP (L-Gln route): step 1/1. In terms of biological role, catalyzes the synthesis of GMP from XMP. This is GMP synthase [glutamine-hydrolyzing] subunit B (guaAB) from Pyrococcus abyssi (strain GE5 / Orsay).